The chain runs to 1004 residues: Importin subunit beta-5 (1004 aa).

M1 is subject to N-acetylmethionine. Residues 21-100 (AETQLLQWCD…REVLLKLCLN (80 aa)) form the Importin N-terminal domain.

It belongs to the importin beta family. Interacts with NAP1.

It localises to the cytoplasm. It is found in the nucleus. The protein resides in the nuclear pore complex. Required for nuclear protein import and mediates docking of import substrate to distinct nucleoporins. Serves a receptor for nuclear localization signals. Mediates the nuclear import of TATA-binding protein (TBP) and of histones H2A and H2B. This Saccharomyces cerevisiae (strain ATCC 204508 / S288c) (Baker's yeast) protein is Importin subunit beta-5 (KAP114).